The chain runs to 159 residues: Ribosomal RNA large subunit methyltransferase H (159 aa).

Residues leucine 76, glycine 108, and 127–132 (FSKMTL) each bind S-adenosyl-L-methionine.

This sequence belongs to the RNA methyltransferase RlmH family. As to quaternary structure, homodimer.

It is found in the cytoplasm. It catalyses the reaction pseudouridine(1915) in 23S rRNA + S-adenosyl-L-methionine = N(3)-methylpseudouridine(1915) in 23S rRNA + S-adenosyl-L-homocysteine + H(+). In terms of biological role, specifically methylates the pseudouridine at position 1915 (m3Psi1915) in 23S rRNA. The polypeptide is Ribosomal RNA large subunit methyltransferase H (Bacillus cereus (strain ATCC 10987 / NRS 248)).